We begin with the raw amino-acid sequence, 273 residues long: Putative tyrosine-protein phosphatase H16_A0669 (273 aa).

The N-terminal stretch at 1–15 is a signal peptide; the sequence is MIKWLQRAGCLSAHA. The active-site Phosphocysteine intermediate is the cysteine 169.

It belongs to the protein-tyrosine phosphatase family.

It carries out the reaction O-phospho-L-tyrosyl-[protein] + H2O = L-tyrosyl-[protein] + phosphate. The sequence is that of Putative tyrosine-protein phosphatase H16_A0669 from Cupriavidus necator (strain ATCC 17699 / DSM 428 / KCTC 22496 / NCIMB 10442 / H16 / Stanier 337) (Ralstonia eutropha).